A 113-amino-acid chain; its full sequence is uncharacterized protein (113 aa).

2 disordered regions span residues 1–22 and 90–113; these read MGEHAIKRHMRQRKPTKHPLAQ and DGRHTTESSFEHSSPSRSPQSDDL. Residues 90-99 are compositionally biased toward basic and acidic residues; that stretch reads DGRHTTESSF. The span at 100-113 shows a compositional bias: low complexity; sequence EHSSPSRSPQSDDL.

This is an uncharacterized protein from Mycobacterium tuberculosis (strain CDC 1551 / Oshkosh).